The following is a 166-amino-acid chain: Large ribosomal subunit protein uL10 (166 aa).

This sequence belongs to the universal ribosomal protein uL10 family. Part of the ribosomal stalk of the 50S ribosomal subunit. The N-terminus interacts with L11 and the large rRNA to form the base of the stalk. The C-terminus forms an elongated spine to which L12 dimers bind in a sequential fashion forming a multimeric L10(L12)X complex.

Its function is as follows. Forms part of the ribosomal stalk, playing a central role in the interaction of the ribosome with GTP-bound translation factors. The sequence is that of Large ribosomal subunit protein uL10 from Bacillus pumilus (strain SAFR-032).